The chain runs to 494 residues: Aspartyl/glutamyl-tRNA(Asn/Gln) amidotransferase subunit B (494 aa).

Belongs to the GatB/GatE family. GatB subfamily. As to quaternary structure, heterotrimer of A, B and C subunits.

It carries out the reaction L-glutamyl-tRNA(Gln) + L-glutamine + ATP + H2O = L-glutaminyl-tRNA(Gln) + L-glutamate + ADP + phosphate + H(+). It catalyses the reaction L-aspartyl-tRNA(Asn) + L-glutamine + ATP + H2O = L-asparaginyl-tRNA(Asn) + L-glutamate + ADP + phosphate + 2 H(+). In terms of biological role, allows the formation of correctly charged Asn-tRNA(Asn) or Gln-tRNA(Gln) through the transamidation of misacylated Asp-tRNA(Asn) or Glu-tRNA(Gln) in organisms which lack either or both of asparaginyl-tRNA or glutaminyl-tRNA synthetases. The reaction takes place in the presence of glutamine and ATP through an activated phospho-Asp-tRNA(Asn) or phospho-Glu-tRNA(Gln). The sequence is that of Aspartyl/glutamyl-tRNA(Asn/Gln) amidotransferase subunit B from Synechococcus sp. (strain WH7803).